We begin with the raw amino-acid sequence, 89 residues long: Conotoxin Lt6.4 (89 aa).

The signal sequence occupies residues Met1–Ala22. The propeptide occupies Asp23–Lys50. 3 disulfide bridges follow: Cys52/Cys67, Cys59/Cys71, and Cys66/Cys80.

This sequence belongs to the conotoxin O1 superfamily. Expressed by the venom duct.

Its subcellular location is the secreted. This Conus litteratus (Lettered cone) protein is Conotoxin Lt6.4.